A 212-amino-acid polypeptide reads, in one-letter code: MICGVDEAGKGSVLGPMVVAAVGCTDMDDLIALGVADSKKLSSKSREKISADIKAQFPFSIVIRTAHDIDELRRTMTMNEIVARSHAEALIPLNCTCAYVDACDVSEERYEETVSSFSPPDCTIVARHKADSLFPPVSAASIIAKVERDRIIEELSKEYGDIGSGYPSDPVTITYLTKYIRHHNQPPVIARSSWETVKNLLHQKNQSSLLDF.

Positions 1–206 (MICGVDEAGK…VKNLLHQKNQ (206 aa)) constitute an RNase H type-2 domain. 3 residues coordinate a divalent metal cation: Asp6, Glu7, and Asp101.

This sequence belongs to the RNase HII family. It depends on Mn(2+) as a cofactor. Mg(2+) serves as cofactor.

It localises to the cytoplasm. The catalysed reaction is Endonucleolytic cleavage to 5'-phosphomonoester.. Endonuclease that specifically degrades the RNA of RNA-DNA hybrids. The polypeptide is Ribonuclease HII (Methanospirillum hungatei JF-1 (strain ATCC 27890 / DSM 864 / NBRC 100397 / JF-1)).